A 568-amino-acid polypeptide reads, in one-letter code: AT-rich interactive domain-containing protein 3B (568 aa).

Residue Met-1 is modified to N-acetylmethionine. Residues 1–22 (MEPLQQQQQQQQQKQPQQPLLQ) are compositionally biased toward low complexity. The interval 1–174 (MEPLQQQQQQ…SVPTAGQPSW (174 aa)) is disordered. Residue Ser-87 is modified to Phosphoserine. The segment covering 88–107 (EPEEEEGGLEDEDGDDDVAE) has biased composition (acidic residues). Residues 151–160 (TKEDHTKDAS) are compositionally biased toward basic and acidic residues. The segment at 201–374 (SRDFAKLYEL…SSPKIRFSIL (174 aa)) is interaction with RB1. The ARID domain occupies 213-305 (DPERKEFLDD…YLYAYECEKK (93 aa)). Ser-309 is modified (phosphoserine). Residue Arg-370 is modified to Asymmetric dimethylarginine. Positions 378–403 (SSSGTSASSPRIPPASTLRKGDGVPV) are disordered. The REKLES domain occupies 425 to 522 (GPLEHLRERL…GVLFAQKPVV (98 aa)). The tract at residues 495–518 (SNIGSINMSVDIDGTTYTGVLFAQ) is interaction with ARID3A. Low complexity predominate over residues 529-559 (TPQSIGSSASSSNSSSSHCSPSPTSSRGTPS). A disordered region spans residues 529–568 (TPQSIGSSASSSNSSSSHCSPSPTSSRGTPSAEPSTSWSL).

Heterodimer with ARID3A. Interacts with unphosphorylated RB1. In terms of tissue distribution, expressed at high levels in testis. Also expressed in prostate, thyroid and thymus.

It is found in the nucleus. In terms of biological role, transcription factor involved in the production of cranial mesenchymal tissues. Favors nuclear targeting of ARID3A. The protein is AT-rich interactive domain-containing protein 3B (Arid3b) of Mus musculus (Mouse).